Reading from the N-terminus, the 568-residue chain is MEETYSPFTGRQGQYNQGYNGGGRRDSRGGMGERIKPVDWGNVSLVPGNWKVLDGKAIKKAGEIKTSTPEAGQLSEEEATKWREEHVITIFGDDCPPPMSSFDHLCGIVPPYLLKKLTAQNFTAPTPVQAQSWPVLLSGRDLVGVAKTGSGKTLGFMVPALAHIAVQEPLRSGDGPMVVVLAPTRELAQQIEEETKKVIPGDVYCGCVYGGAPKGPQLGLLRRGVHILVATPGRLIDFLDIKRINLHRVTYLVLDEADRMLDMGFEPQVRKICGQIRPDRQTVMFSATWPREIQRLAAEFQKQWIRISVGSTELQANKDVTQRFILTQEFAKQDELRKLMQEHREERVLVFCKMKRTADELERQLRRWGYDAMAIHGDKEQRQREFILARFRKDPRLCLVATDVAARGLDIKQLETVINYDFPMQIDDYVHRIGRTGRAGGEGRCVYLITKKEAQITPSVLKELIGILERAQQEIPDWMIEWNAQQPRYQVKRNRGMNGFGRHQSAPFLRNGHRPSFSANGNYSAHGNGTFGLGKHNDDAVPFSSSAIQYKRFDSDDEAEPSRKKYAR.

The interval 1-34 (MEETYSPFTGRQGQYNQGYNGGGRRDSRGGMGER) is disordered. Positions 23–34 (GRRDSRGGMGER) are enriched in basic and acidic residues. Residues 102–130 (FDHLCGIVPPYLLKKLTAQNFTAPTPVQA) carry the Q motif motif. The 175-residue stretch at 133–307 (WPVLLSGRDL…AEFQKQWIRI (175 aa)) folds into the Helicase ATP-binding domain. 146–153 (AKTGSGKT) contacts ATP. The DEAD box motif lies at 255 to 258 (DEAD). The Helicase C-terminal domain maps to 335-483 (ELRKLMQEHR…EIPDWMIEWN (149 aa)).

The protein belongs to the DEAD box helicase family. DDX5/DBP2 subfamily.

The protein localises to the nucleus. It carries out the reaction ATP + H2O = ADP + phosphate + H(+). This is Putative DEAD-box RNA helicase HEL64 (HEL64) from Trypanosoma brucei brucei.